The sequence spans 268 residues: Thiazole synthase (268 aa).

K96 (schiff-base intermediate with DXP) is an active-site residue. 1-deoxy-D-xylulose 5-phosphate-binding positions include G157, 185–186, and 207–208; these read AG and NT. The segment at 238–268 is disordered; the sequence is PMRPREAASPSSPVEGVPFTPTGPRPGRGPQ. Pro residues predominate over residues 258–268; that stretch reads PTGPRPGRGPQ.

It belongs to the ThiG family. As to quaternary structure, homotetramer. Forms heterodimers with either ThiH or ThiS.

It is found in the cytoplasm. The catalysed reaction is [ThiS sulfur-carrier protein]-C-terminal-Gly-aminoethanethioate + 2-iminoacetate + 1-deoxy-D-xylulose 5-phosphate = [ThiS sulfur-carrier protein]-C-terminal Gly-Gly + 2-[(2R,5Z)-2-carboxy-4-methylthiazol-5(2H)-ylidene]ethyl phosphate + 2 H2O + H(+). Its pathway is cofactor biosynthesis; thiamine diphosphate biosynthesis. Catalyzes the rearrangement of 1-deoxy-D-xylulose 5-phosphate (DXP) to produce the thiazole phosphate moiety of thiamine. Sulfur is provided by the thiocarboxylate moiety of the carrier protein ThiS. In vitro, sulfur can be provided by H(2)S. This is Thiazole synthase from Thermus thermophilus (strain ATCC 27634 / DSM 579 / HB8).